A 390-amino-acid chain; its full sequence is Flap endonuclease 1 (390 aa).

The interval 1 to 111 (MGIKGLAKLL…GELLKRREKR (111 aa)) is N-domain. Asp-34 contributes to the Mg(2+) binding site. Positions 47 and 77 each coordinate DNA. Mg(2+) contacts are provided by Asp-93, Glu-165, Glu-167, Asp-186, and Asp-188. Positions 129–260 (EQDKQSKRLV…KTALKLIREH (132 aa)) are I-domain. Glu-165 contacts DNA. DNA is bound by residues Gly-238 and Asp-240. Asp-240 lines the Mg(2+) pocket. The disordered stretch occupies residues 342–390 (KPQSRMDSFFKVKANPEGDKKKAEKRKAELAASRGKGKKGKGGGGFKKK). Residues 343–351 (PQSRMDSFF) are interaction with PCNA. Positions 349-370 (SFFKVKANPEGDKKKAEKRKAE) are enriched in basic and acidic residues. The span at 376–390 (GKGKKGKGGGGFKKK) shows a compositional bias: basic residues.

Belongs to the XPG/RAD2 endonuclease family. FEN1 subfamily. As to quaternary structure, interacts with PCNA. Three molecules of FEN1 bind to one PCNA trimer with each molecule binding to one PCNA monomer. PCNA stimulates the nuclease activity without altering cleavage specificity. The cofactor is Mg(2+). Phosphorylated. Phosphorylation upon DNA damage induces relocalization to the nuclear plasma.

The protein localises to the nucleus. It localises to the nucleolus. The protein resides in the nucleoplasm. It is found in the mitochondrion. In terms of biological role, structure-specific nuclease with 5'-flap endonuclease and 5'-3' exonuclease activities involved in DNA replication and repair. During DNA replication, cleaves the 5'-overhanging flap structure that is generated by displacement synthesis when DNA polymerase encounters the 5'-end of a downstream Okazaki fragment. It enters the flap from the 5'-end and then tracks to cleave the flap base, leaving a nick for ligation. Also involved in the long patch base excision repair (LP-BER) pathway, by cleaving within the apurinic/apyrimidinic (AP) site-terminated flap. Acts as a genome stabilization factor that prevents flaps from equilibrating into structures that lead to duplications and deletions. Also possesses 5'-3' exonuclease activity on nicked or gapped double-stranded DNA, and exhibits RNase H activity. Also involved in replication and repair of rDNA and in repairing mitochondrial DNA. The chain is Flap endonuclease 1 from Thalassiosira pseudonana (Marine diatom).